The chain runs to 224 residues: MNEQDKLKKAVGEKAATMVKDGMKVGLGSGSTVYWMIRSLGERIQQDGLKIEGIPSSNQTATWAEEAGIPLTDFSNVKELDITIDGADEVDANNHLIKGGGAALFREKIIAQAAKEFVIIVDQSKVVETLGEFSLPVEVLPFSWQRTANEISKLGCVPTVRVHEEEPLVTDNGNYILDCPFKVIPHPDKLNKEIKSIVGVIETGLFIDMATTVIVGEKDNIYIK.

Substrate-binding positions include 29 to 32 (SGST), 85 to 88 (DGAD), and 98 to 101 (KGGG). Catalysis depends on E107, which acts as the Proton acceptor. Residue K125 coordinates substrate.

It belongs to the ribose 5-phosphate isomerase family. Homodimer.

It carries out the reaction aldehydo-D-ribose 5-phosphate = D-ribulose 5-phosphate. It participates in carbohydrate degradation; pentose phosphate pathway; D-ribose 5-phosphate from D-ribulose 5-phosphate (non-oxidative stage): step 1/1. Catalyzes the reversible conversion of ribose-5-phosphate to ribulose 5-phosphate. The protein is Ribose-5-phosphate isomerase A 1 of Oceanobacillus iheyensis (strain DSM 14371 / CIP 107618 / JCM 11309 / KCTC 3954 / HTE831).